We begin with the raw amino-acid sequence, 211 residues long: Proteasome subunit beta 1 (211 aa).

Residues 1–17 (MVIMGNELQLENKILKG) constitute a propeptide, removed in mature form; by autocatalysis. The active-site Nucleophile is Thr18.

It belongs to the peptidase T1B family. As to quaternary structure, the 20S proteasome core is composed of 14 alpha and 14 beta subunits that assemble into four stacked heptameric rings, resulting in a barrel-shaped structure. The two inner rings, each composed of seven catalytic beta subunits, are sandwiched by two outer rings, each composed of seven alpha subunits. The catalytic chamber with the active sites is on the inside of the barrel. Has a gated structure, the ends of the cylinder being occluded by the N-termini of the alpha-subunits. Is capped at one or both ends by the proteasome regulatory ATPase, PAN.

Its subcellular location is the cytoplasm. The enzyme catalyses Cleavage of peptide bonds with very broad specificity.. With respect to regulation, the formation of the proteasomal ATPase PAN-20S proteasome complex, via the docking of the C-termini of PAN into the intersubunit pockets in the alpha-rings, triggers opening of the gate for substrate entry. Interconversion between the open-gate and close-gate conformations leads to a dynamic regulation of the 20S proteasome proteolysis activity. Component of the proteasome core, a large protease complex with broad specificity involved in protein degradation. The protein is Proteasome subunit beta 1 of Saccharolobus islandicus (strain M.16.27) (Sulfolobus islandicus).